The following is a 219-amino-acid chain: Factor in the germline alpha (219 aa).

Residues 65-117 (ERRRVANAKERERIKNLNRGFARLKALVPFLPQSRKPSKVDILKGATEYIQVL) enclose the bHLH domain. The segment at 124-151 (AKDSKKQDPDEQSYSNNSSESHTSSARQ) is disordered. Residues 136 to 148 (SYSNNSSESHTSS) show a composition bias toward low complexity.

Heterodimer with TCF3/isoform E12. Germ cells. Expressed in the fetal ovary, but not by a range of other tissues. Expression increases across mid-gestation, rising some 40-fold by the time of primordial follicle formation.

It localises to the nucleus. Germline specific transcription factor implicated in postnatal oocyte-specific gene expression. Plays a key regulatory role in the expression of multiple oocyte-specific genes, including those that initiate folliculogenesis and those that encode the zona pellucida (ZP1, ZP2 and ZP3) required for fertilization and early embryonic survival. Essential for oocytes to survive and form primordial follicles. The persistence of FIGLA in adult females suggests that it may regulate additional pathways that are essential for normal ovarian development. Binds to the E-box (5'-CANNTG-3') of the ZPs (ZP1, ZP2, ZP3) promoters. This Homo sapiens (Human) protein is Factor in the germline alpha (FIGLA).